The chain runs to 209 residues: Probable GTP-binding protein EngB (209 aa).

Residues 22–198 enclose the EngB-type G domain; that stretch reads TPLEIAFVGR…NRTVGSWFDA (177 aa). Mg(2+) contacts are provided by Ser37 and Thr59.

This sequence belongs to the TRAFAC class TrmE-Era-EngA-EngB-Septin-like GTPase superfamily. EngB GTPase family. Requires Mg(2+) as cofactor.

Its function is as follows. Necessary for normal cell division and for the maintenance of normal septation. The sequence is that of Probable GTP-binding protein EngB from Neisseria gonorrhoeae.